Reading from the N-terminus, the 94-residue chain is Large ribosomal subunit protein bL25 (94 aa).

It belongs to the bacterial ribosomal protein bL25 family. As to quaternary structure, part of the 50S ribosomal subunit; part of the 5S rRNA/L5/L18/L25 subcomplex. Contacts the 5S rRNA. Binds to the 5S rRNA independently of L5 and L18.

In terms of biological role, this is one of the proteins that binds to the 5S RNA in the ribosome where it forms part of the central protuberance. The chain is Large ribosomal subunit protein bL25 from Escherichia coli O157:H7.